The chain runs to 448 residues: Probable xyloglucan 6-xylosyltransferase 1 (448 aa).

The Cytoplasmic segment spans residues 1–19; sequence MWVAERVVGERRMREIQRF. Residues 20 to 42 traverse the membrane as a helical; Signal-anchor for type II membrane protein segment; sequence ARNAKLTVVCLLLTVVVLRGTVG. Residues 43–448 lie on the Lumenal side of the membrane; the sequence is AGKFGTPQQD…AFKAMKTTST (406 aa). The tract at residues 71-113 is disordered; it reads HHDALSRGGGSSSSSGRAAQRDDEPDPPPRTLRDPPYTLGPKI. Asparagine 421 is a glycosylation site (N-linked (GlcNAc...) asparagine).

It belongs to the glycosyltransferase 34 family.

The protein localises to the golgi apparatus membrane. It catalyses the reaction Transfers an alpha-D-xylosyl residue from UDP-D-xylose to a glucose residue in xyloglucan, forming an alpha-(1-&gt;6)-D-xylosyl-D-glucose linkage.. In terms of biological role, probable xyloglucan xylosyltransferase involved in the biosynthesis of xyloglucan in roots. This is Probable xyloglucan 6-xylosyltransferase 1 from Oryza sativa subsp. indica (Rice).